Consider the following 784-residue polypeptide: SWI/SNF complex subunit SWI3C homolog (784 aa).

Residues 1–10 are compositionally biased toward polar residues; that stretch reads MPRKASSTSD. Positions 1-68 are disordered; the sequence is MPRKASSTSD…PEDADDETLA (68 aa). Positions 24 to 39 are enriched in low complexity; it reads ASPSPSNRSSAAAAAA. The span at 43-66 shows a compositional bias: acidic residues; sequence DDSDSAAVNEDDDSAVPEDADDET. The SWIRM domain occupies 185 to 284; that stretch reads HVVPKHSDWF…YLASGSVHRG (100 aa). The ZZ-type; degenerate zinc finger occupies 355-409; the sequence is LSESSCSYCLQPLTSLHYQSLKEADIALCSDCFHDARYITGHSSLDFQRIDGDND. Cys360, Cys363, Cys383, and Cys386 together coordinate Zn(2+). The SANT domain maps to 413-464; that stretch reads NDGDSWTDQETLLLLEGIEKYNDNWNNIAEHVGTKSKAQCIYHFIRLPVEDG. Disordered regions lie at residues 667–702 and 760–784; these read LASPGNSLPGGSTSTMSSNPMSMSPRPMGVPGSMPQ and GMPNSVTPNHHQLLRSSSGNNSSVG. Low complexity predominate over residues 675–695; the sequence is PGGSTSTMSSNPMSMSPRPMG.

Interacts with LFR. Interacts with NMCP1.

The protein localises to the nucleus. It is found in the nucleoplasm. Functionally, component of a multiprotein complex equivalent of the SWI/SNF complex, an ATP-dependent chromatin-remodeling complex, which is required for the positive and negative regulation of gene expression of a large number of genes. It changes chromatin structure by altering DNA-histone contacts within a nucleosome, leading eventually to a change in nucleosome position, thus facilitating or repressing binding of gene-specific transcription factors. May be involved in positive response to drought stress and modulation of root growth through its interaction with NMCP1. This Oryza sativa subsp. japonica (Rice) protein is SWI/SNF complex subunit SWI3C homolog.